The sequence spans 568 residues: 2-succinyl-5-enolpyruvyl-6-hydroxy-3-cyclohexene-1-carboxylate synthase (568 aa).

This sequence belongs to the TPP enzyme family. MenD subfamily. Homodimer. Requires Mg(2+) as cofactor. The cofactor is Mn(2+). It depends on thiamine diphosphate as a cofactor.

It catalyses the reaction isochorismate + 2-oxoglutarate + H(+) = 5-enolpyruvoyl-6-hydroxy-2-succinyl-cyclohex-3-ene-1-carboxylate + CO2. Its pathway is quinol/quinone metabolism; 1,4-dihydroxy-2-naphthoate biosynthesis; 1,4-dihydroxy-2-naphthoate from chorismate: step 2/7. It participates in quinol/quinone metabolism; menaquinone biosynthesis. Catalyzes the thiamine diphosphate-dependent decarboxylation of 2-oxoglutarate and the subsequent addition of the resulting succinic semialdehyde-thiamine pyrophosphate anion to isochorismate to yield 2-succinyl-5-enolpyruvyl-6-hydroxy-3-cyclohexene-1-carboxylate (SEPHCHC). The polypeptide is 2-succinyl-5-enolpyruvyl-6-hydroxy-3-cyclohexene-1-carboxylate synthase (Haemophilus influenzae (strain PittGG)).